The following is a 440-amino-acid chain: MNPSQILENLKKELNENEYENYLSNLKFNEKQSKADLLVFNAPNELMAKFIQTKYGKKIAHFYEVQSGNKAIINIQAQSTKQSNKSTKIDIAHIQAQSTILNPSFTFESFVVGDSNKYAYGACKAIAHKDKLGKLYNPIFVYGPTGLGKTHLLQAVGNASLEMGKKVIYATSENFINDFTSNLKNGSLDKFHEKYRNCDVLLIDDVQFLGKTDKIQEEFFFIFNEIKNNDGQIIMTSDNPPNMLKGITERLKSRFAHGIIADITPPQLDTKIAIIRKKCEFNDINLSNDIINYIATSLGDNIREIEGIIISLNAYATILGQEITLELAKSVMKDHIKEKKENITIDDILSLVCKEFNIKPSDVKSNKKTQNIVTARRIVIYLARTLTALTMPQLANYFEMKDHTAISHNVKKITEMIENDTSLKAKIEELKNKILIKSQS.

The segment at 1–74 (MNPSQILENL…VQSGNKAIIN (74 aa)) is domain I, interacts with DnaA modulators. Residues 74–99 (NIQAQSTKQSNKSTKIDIAHIQAQST) are domain II. Positions 100–316 (ILNPSFTFES…GIIISLNAYA (217 aa)) are domain III, AAA+ region. Positions 146, 148, 149, and 150 each coordinate ATP. A domain IV, binds dsDNA region spans residues 317–440 (TILGQEITLE…KNKILIKSQS (124 aa)).

Belongs to the DnaA family. In terms of assembly, oligomerizes as a right-handed, spiral filament on DNA at oriC.

It is found in the cytoplasm. In terms of biological role, plays an essential role in the initiation and regulation of chromosomal replication. ATP-DnaA binds to the origin of replication (oriC) to initiate formation of the DNA replication initiation complex once per cell cycle. Binds the DnaA box (a 9 base pair repeat at the origin) and separates the double-stranded (ds)DNA. Forms a right-handed helical filament on oriC DNA; dsDNA binds to the exterior of the filament while single-stranded (ss)DNA is stabiized in the filament's interior. The ATP-DnaA-oriC complex binds and stabilizes one strand of the AT-rich DNA unwinding element (DUE), permitting loading of DNA polymerase. After initiation quickly degrades to an ADP-DnaA complex that is not apt for DNA replication. Binds acidic phospholipids. The polypeptide is Chromosomal replication initiator protein DnaA (Campylobacter jejuni subsp. doylei (strain ATCC BAA-1458 / RM4099 / 269.97)).